The primary structure comprises 207 residues: MEITVTLVPINLRGAEEPERNQRFRLKPLCAAAEVCLAVKCRSPFAKFKVLISVTNFDNKHLQATVCSRHAAVCVVNAPGQREVVFDGFAKPDDEGATVPLVVGPLFAARQAGRCVRAAVDAIQRQQTVLKVFINEAYLQSAWGAVRGLFFSDNNHESDLTSNVGKFISVDPTDVGARGANSSKWVPAINYVTGRQLLTILFIFKFI.

This protein is required for viral late gene expression. This chain is Putative early 22.7 kDa protein (DA18), found in Orgyia pseudotsugata (Douglas-fir tussock moth).